A 270-amino-acid chain; its full sequence is Undecaprenyl-diphosphatase (270 aa).

The next 8 helical transmembrane spans lie at 1 to 21 (MDLF…FLPI), 39 to 59 (QGLV…MLYF), 87 to 107 (SHLV…GLAC), 114 to 134 (VARD…LLWW), 147 to 167 (ALSW…LIPG), 193 to 213 (FLMA…DLFA), 223 to 243 (FLGV…HGLL), and 250 to 270 (TMTP…ATLG).

This sequence belongs to the UppP family.

The protein resides in the cell inner membrane. The catalysed reaction is di-trans,octa-cis-undecaprenyl diphosphate + H2O = di-trans,octa-cis-undecaprenyl phosphate + phosphate + H(+). Its function is as follows. Catalyzes the dephosphorylation of undecaprenyl diphosphate (UPP). Confers resistance to bacitracin. The chain is Undecaprenyl-diphosphatase from Magnetococcus marinus (strain ATCC BAA-1437 / JCM 17883 / MC-1).